A 176-amino-acid chain; its full sequence is Cytochrome b (176 aa).

The next 3 helical transmembrane spans lie at 33 to 53 (FGSLLGICLGLQILTGLFLAM), 77 to 98 (WVLRYLHANGASMFFICLYLHV), and 113 to 133 (WNMGVVLLFAVMATAFMGYVL). Residues H83 and H97 each coordinate heme b.

It belongs to the cytochrome b family. As to quaternary structure, the cytochrome bc1 complex contains 11 subunits: 3 respiratory subunits (MT-CYB, CYC1 and UQCRFS1), 2 core proteins (UQCRC1 and UQCRC2) and 6 low-molecular weight proteins (UQCRH/QCR6, UQCRB/QCR7, UQCRQ/QCR8, UQCR10/QCR9, UQCR11/QCR10 and a cleavage product of UQCRFS1). This cytochrome bc1 complex then forms a dimer. It depends on heme b as a cofactor.

It localises to the mitochondrion inner membrane. Its function is as follows. Component of the ubiquinol-cytochrome c reductase complex (complex III or cytochrome b-c1 complex) that is part of the mitochondrial respiratory chain. The b-c1 complex mediates electron transfer from ubiquinol to cytochrome c. Contributes to the generation of a proton gradient across the mitochondrial membrane that is then used for ATP synthesis. This Nycticeius humeralis (Evening bat) protein is Cytochrome b (MT-CYB).